The sequence spans 328 residues: Malate dehydrogenase (328 aa).

16 to 22 (GAAGQIS) is an NAD(+) binding site. 2 residues coordinate substrate: arginine 97 and arginine 103. NAD(+)-binding positions include asparagine 110, glutamine 117, and 134 to 136 (VGN). Positions 136 and 167 each coordinate substrate. Catalysis depends on histidine 192, which acts as the Proton acceptor.

The protein belongs to the LDH/MDH superfamily. MDH type 2 family. In terms of assembly, homotetramer.

It carries out the reaction (S)-malate + NAD(+) = oxaloacetate + NADH + H(+). Its activity is regulated as follows. Citrate activates the enzyme in the oxidation of malate to oxaloacetate and inhibits it in the reverse reaction. In terms of biological role, catalyzes the reversible oxidation of malate to oxaloacetate. Exhibits higher catalytic efficiency for oxaloacetate reduction than for malate oxidation in vitro. Almost equally active both for NADH and NADPH on the bases of the kcat values at pH 6.5, but catalytic efficiency for oxaloacetate reduction is 50-fold higher with NADH. The sequence is that of Malate dehydrogenase from Corynebacterium glutamicum (strain ATCC 13032 / DSM 20300 / JCM 1318 / BCRC 11384 / CCUG 27702 / LMG 3730 / NBRC 12168 / NCIMB 10025 / NRRL B-2784 / 534).